The following is a 295-amino-acid chain: Protease HtpX (295 aa).

2 helical membrane-spanning segments follow: residues 4-24 (IFLF…VLRL) and 42-62 (ALLI…LAIS). Residue H147 participates in Zn(2+) binding. The active site involves E148. A Zn(2+)-binding site is contributed by H151. 2 helical membrane-spanning segments follow: residues 155–175 (GDMV…IFLA) and 197–217 (FWIT…IIVM). E224 contributes to the Zn(2+) binding site.

This sequence belongs to the peptidase M48B family. The cofactor is Zn(2+).

Its subcellular location is the cell inner membrane. This chain is Protease HtpX, found in Thioalkalivibrio sulfidiphilus (strain HL-EbGR7).